Here is a 111-residue protein sequence, read N- to C-terminus: Nucleoid-associated protein PSEEN1789 (111 aa).

Disordered regions lie at residues 1-25 (MMKG…KMQE) and 89-111 (NSQD…KMPF).

It belongs to the YbaB/EbfC family. Homodimer.

Its subcellular location is the cytoplasm. The protein resides in the nucleoid. Functionally, binds to DNA and alters its conformation. May be involved in regulation of gene expression, nucleoid organization and DNA protection. In Pseudomonas entomophila (strain L48), this protein is Nucleoid-associated protein PSEEN1789.